The chain runs to 280 residues: 4-diphosphocytidyl-2-C-methyl-D-erythritol kinase (280 aa).

Lys-8 is a catalytic residue. ATP is bound at residue Pro-91 to Ser-101. Asp-133 is an active-site residue.

This sequence belongs to the GHMP kinase family. IspE subfamily.

The catalysed reaction is 4-CDP-2-C-methyl-D-erythritol + ATP = 4-CDP-2-C-methyl-D-erythritol 2-phosphate + ADP + H(+). It participates in isoprenoid biosynthesis; isopentenyl diphosphate biosynthesis via DXP pathway; isopentenyl diphosphate from 1-deoxy-D-xylulose 5-phosphate: step 3/6. Functionally, catalyzes the phosphorylation of the position 2 hydroxy group of 4-diphosphocytidyl-2C-methyl-D-erythritol. The chain is 4-diphosphocytidyl-2-C-methyl-D-erythritol kinase from Clostridium kluyveri (strain NBRC 12016).